A 37-amino-acid chain; its full sequence is Large ribosomal subunit protein bL36 (37 aa).

The protein belongs to the bacterial ribosomal protein bL36 family.

The chain is Large ribosomal subunit protein bL36 from Legionella pneumophila subsp. pneumophila (strain Philadelphia 1 / ATCC 33152 / DSM 7513).